The primary structure comprises 790 residues: Cadherin-6 (790 aa).

A signal peptide spans 1 to 18 (MRTYRYFLLLFWVGQPYP). A propeptide spanning residues 19 to 53 (TFSNPLSKRTSGFPAKRKALELSANSRNELSRSKR) is cleaved from the precursor. 5 Cadherin domains span residues 54 to 159 (SWMW…EPIF), 160 to 268 (TKDV…PPRF), 269 to 383 (PQST…PPVF), 384 to 486 (SKLA…DNAP), and 487 to 608 (EFAE…LIHP). The Extracellular segment spans residues 54–615 (SWMWNQFFLL…IHPTGLSTGA (562 aa)). N-linked (GlcNAc...) asparagine glycosylation is present at N255. Residues 260-291 (DVNDNPPRFPQSTYQFKTPESSPPGTPIGRIK) form a disordered region. Polar residues predominate over residues 269-279 (PQSTYQFKTPE). Residues N399, N437, N455, and N536 are each glycosylated (N-linked (GlcNAc...) asparagine). Residues 616-636 (LVAILLCIVILLVTVVLFAAL) traverse the membrane as a helical segment. Topologically, residues 637–790 (RRQRKKEPLI…YGGMDSDKDS (154 aa)) are cytoplasmic. Phosphoserine occurs at positions 786 and 790.

The protein localises to the cell membrane. Functionally, cadherins are calcium-dependent cell adhesion proteins. They preferentially interact with themselves in a homophilic manner in connecting cells; cadherins may thus contribute to the sorting of heterogeneous cell types. The chain is Cadherin-6 (Cdh6) from Mus musculus (Mouse).